The chain runs to 946 residues: Increased sodium tolerance protein 2 (946 aa).

Over M1–S121 the chain is Cytoplasmic. Residues L122–L142 form a helical membrane-spanning segment. Residues S143 to E153 are Extracellular-facing. Residues F154–L174 form a helical membrane-spanning segment. Over Y175–C217 the chain is Cytoplasmic. A helical transmembrane segment spans residues F218–A238. The Extracellular portion of the chain corresponds to L239–S253. A helical transmembrane segment spans residues I254–Y274. At N275–N302 the chain is on the cytoplasmic side. The chain crosses the membrane as a helical span at residues F303–P323. Over M324–Q447 the chain is Extracellular. Residues F448 to V468 traverse the membrane as a helical segment. Over N469–K505 the chain is Cytoplasmic. A helical transmembrane segment spans residues L506–T526. Residues A527–W563 lie on the Extracellular side of the membrane. The helical transmembrane segment at I564–F584 threads the bilayer. Residues S585–L946 lie on the Cytoplasmic side of the membrane. Disordered stretches follow at residues E617–S638 and T665–R718. The span at N628 to S638 shows a compositional bias: basic and acidic residues. S638 carries the post-translational modification Phosphoserine. A compositionally biased stretch (low complexity) spans P671–S689. T701 is subject to Phosphothreonine. Residues S704 and S720 each carry the phosphoserine modification. T726 is modified (phosphothreonine). The residue at position 729 (S729) is a Phosphoserine. At Y730 the chain carries Phosphotyrosine. Phosphoserine is present on S757. Positions R759–P784 are disordered. Residues S764 to T775 show a composition bias toward low complexity. S793, S844, and S847 each carry phosphoserine. Positions V846 to L946 are disordered. T850 is modified (phosphothreonine). The segment covering S859–I868 has biased composition (polar residues). Residues T884 to T893 are compositionally biased toward low complexity. Positions P895 to R905 are enriched in basic residues. Over residues S916 to A927 the composition is skewed to low complexity. Over residues K931 to L946 the composition is skewed to basic residues.

Interacts with BTN2.

It localises to the cell membrane. Functionally, may be involved in ion homeostasis together with BTN1 or BTN2. In Saccharomyces cerevisiae (strain ATCC 204508 / S288c) (Baker's yeast), this protein is Increased sodium tolerance protein 2 (IST2).